Reading from the N-terminus, the 513-residue chain is MGVYSRAVAFSVFVSFLLFFTAYSKRNDGTFRVGLKKLKLDPNNRLATRFGSKQEEALRSSLRSYNNNLGGDSGDADIVPLKNYLDAQYYGEIAIGTPPQKFTVIFDTGSSNLWVPSGKCFFSLSCYFHAKYKSSRSSTYKKSGKRAAIHYGSGSISGFFSYDAVTVGDLVVKDQEFIETTSEPGLTFLVAKFDGLLGLGFQEIAVGNATPVWYNMLKQGLIKRPVFSFWLNRDPKSEEGGEIVFGGVDPKHFRGEHTFVPVTQRGYWQFDMGEVLIAGESTGYCGSGCSAIADSGTSLLAGPTAVVAMINKAIGASGVVSQQCKTVVDQYGQTILDLLLAETQPKKICSQIGLCAYDGTHGVSMGIESVVDKENTRSSSGLRDAGCPACEMAVVWIQSQLRQNMTQERIVNYINEICERMPSPNGESAVDCSQLSKMPTVSFTIGGKVFDLAPEEYVLKIGEGPVAQCISGFTALDIPPPRGPLWILGDVFMGKYHTVFDFGNEQVGFAEAV.

Positions 1–24 (MGVYSRAVAFSVFVSFLLFFTAYS) are cleaved as a signal peptide. Positions 25-71 (KRNDGTFRVGLKKLKLDPNNRLATRFGSKQEEALRSSLRSYNNNLGG) are cleaved as a propeptide — activation peptide. Residues 89-510 (YYGEIAIGTP…DFGNEQVGFA (422 aa)) enclose the Peptidase A1 domain. D107 is a catalytic residue. Cystine bridges form between C120/C126 and C285/C289. D294 is an active-site residue. In terms of domain architecture, Saposin B-type spans 319–424 (VVSQQCKTVV…NEICERMPSP (106 aa)). Disulfide bonds link C324–C418, C349–C390, C355–C387, and C432–C469. N404 carries an N-linked (GlcNAc...) asparagine glycan.

It belongs to the peptidase A1 family. As to expression, expressed in seed pods and dry seeds.

It localises to the vacuole. Involved in the breakdown of propeptides of storage proteins in protein-storage vacuoles. The polypeptide is Aspartic proteinase A2 (APA2) (Arabidopsis thaliana (Mouse-ear cress)).